Consider the following 138-residue polypeptide: ER-derived vesicles protein ERV14 (138 aa).

Residues 2–6 (GAWLF) lie on the Cytoplasmic side of the membrane. A helical membrane pass occupies residues 7-27 (ILAVVVNCINLFGQVHFTILY). Over 28 to 52 (ADLEADYINPIELCSKVNKLITPEA) the chain is Extracellular. Residues 53 to 73 (ALHGALSLLFLLNGYWFVFLL) form a helical membrane-spanning segment. The Cytoplasmic segment spans residues 74–111 (NLPVLAYNLNKIYNKVQLLDATEIFRTLGKHKRESFLK). Residues 112 to 132 (LGFHLLMFFFYLYRMIMALIA) traverse the membrane as a helical segment. Over 133-138 (ESGDDF) the chain is Extracellular.

The protein belongs to the cornichon family.

The protein resides in the endoplasmic reticulum membrane. Its subcellular location is the golgi apparatus membrane. In terms of biological role, could regulate export of the bud site and axial growth sites selection protein AXL2 and possibly other secretory proteins from the endoplasmic reticulum in COPII-coated vesicles. Seems to be required for axial budding pattern in haploid cells. This is ER-derived vesicles protein ERV14 (ERV14) from Saccharomyces cerevisiae (strain ATCC 204508 / S288c) (Baker's yeast).